Here is a 554-residue protein sequence, read N- to C-terminus: MPTINVNKVDLERLSNISLSDKIIEDRFPMMGVEVEEIFEEVDKNGKKQKMVQFSINPDRPDYLSVEGLARGFRGFMGITTGIQEFEVLNSDIKVIVEENETRPYVAFALVKNVLMDEFVLESMINLQEKLHWAIGRDRKKLAIGIHDFDKVKAPFTYKEIKGDEIKFVPLGYEDEKMTPREIIEKHEKGIKYAHLIQNDKFPIIVDANGEVLSMPPIINGTLTKVTPTSKNLLIDITGTEKEAVEETLNIIVCALAERRGTIVSVDVNGKKYPDLSLKSRMISVESINKKLGLELNPGEMIQAVKKSGMDALYEDGNLIVKIPAYRNDILHNVDLKEEIAINYGYEKFEGKLPSVATTGSKDPVEKKCNAMSDLMIGLGFYEVMNLTLSNQDTLFEKMNLKVEEKDYIEVLKPASIEHRVLRTSILPLLLETLYINKHHSLPQKIFEIGDCVVIDENDTETDTKCKNIKKIAGAITHPLTNFNEIKSSTEALLREFFEDFEFENYEHPAFIPGRCAKIIKDGKEVGFFGEIHPEVILNFELEHPIVGFEITIE.

The B5 domain occupies 276-351; that stretch reads LSLKSRMISV…INYGYEKFEG (76 aa). 4 residues coordinate Mg(2+): D329, D335, E338, and E339.

Belongs to the phenylalanyl-tRNA synthetase beta subunit family. Type 2 subfamily. As to quaternary structure, tetramer of two alpha and two beta subunits. Mg(2+) is required as a cofactor.

The protein resides in the cytoplasm. The catalysed reaction is tRNA(Phe) + L-phenylalanine + ATP = L-phenylalanyl-tRNA(Phe) + AMP + diphosphate + H(+). In Methanococcus maripaludis (strain C5 / ATCC BAA-1333), this protein is Phenylalanine--tRNA ligase beta subunit.